We begin with the raw amino-acid sequence, 175 residues long: Large ribosomal subunit protein uL10 (175 aa).

Belongs to the universal ribosomal protein uL10 family. Part of the ribosomal stalk of the 50S ribosomal subunit. The N-terminus interacts with L11 and the large rRNA to form the base of the stalk. The C-terminus forms an elongated spine to which L12 dimers bind in a sequential fashion forming a multimeric L10(L12)X complex.

In terms of biological role, forms part of the ribosomal stalk, playing a central role in the interaction of the ribosome with GTP-bound translation factors. The sequence is that of Large ribosomal subunit protein uL10 from Desulfotalea psychrophila (strain LSv54 / DSM 12343).